Consider the following 950-residue polypeptide: Serine/threonine-protein kinase 10-A (950 aa).

One can recognise a Protein kinase domain in the interval tryptophan 36–valine 294. ATP-binding positions include leucine 42–valine 50 and lysine 65. The active-site Proton acceptor is aspartate 157. Positions glutamate 319–aspartate 331 are enriched in acidic residues. Positions glutamate 319–serine 478 are disordered. Residues glutamate 347 to glutamine 356 show a composition bias toward basic and acidic residues. Polar residues predominate over residues serine 365 to arginine 382. Residues glutamate 416 to serine 432 are compositionally biased toward basic and acidic residues. Positions serine 433–alanine 445 are enriched in low complexity. Residues serine 452 to tryptophan 463 are compositionally biased toward polar residues. 3 positions are modified to phosphoserine; by PLK1: serine 482, serine 486, and serine 490. Residues isoleucine 634 to lysine 786 are a coiled coil.

The protein belongs to the protein kinase superfamily. STE Ser/Thr protein kinase family. STE20 subfamily. As to quaternary structure, homodimer. In terms of processing, autophosphorylates. Phosphorylated by plk1/plx1, suggesting the existence of a feedback loop with plk1/plx1. activation of the protein.

It localises to the cell membrane. It carries out the reaction L-seryl-[protein] + ATP = O-phospho-L-seryl-[protein] + ADP + H(+). The catalysed reaction is L-threonyl-[protein] + ATP = O-phospho-L-threonyl-[protein] + ADP + H(+). May act as a polo kinase kinase by mediating phosphorylation of plk1/plx1 and subsequent activation of plk1/plx1 during oocyte maturation. This Xenopus laevis (African clawed frog) protein is Serine/threonine-protein kinase 10-A (stk10-a).